The primary structure comprises 511 residues: MTINPSNVENSSSKINSYFSKLTDYIWPIKRHEVSKFLFITLLMFCILFIQNLIRALKDSIVTTMIGAEIISFLKFWGVMPSAFLMTAIYVKLVNKMKAENIFYLIISIFLTFFALFAYVIFPNHEMLHFSPVTVQNLMASLPNLKWFIWLLSKWSFSLFYIIAELWPNVVFALLFWQFVNNITTVEESKRFYPLFGLLSQTGIYLAGQFLENLSNINDYVTNKFALQSSFHTLSIQIILTIVLILGIIAIKTFWLLNHKVLDKEHMALLRFKAKKKSMTIAESFQMLLSSRHIRLIATLLICYGIAINLVEGPWKAAATKIYKTPTEYAAFIGSYLSYTGVFTILFVVLGSNIVRRLGWFTAAVITPLIVFITGILFFAVNNFERFAGLIIANFILTDPALIAITIGAIQNVLSKSSKYTLFDSTKEMAYVPLDPEIKIKGKAAADVIGTKLGKSGSAFLQSLVFIILPSASYQSISTCLMIIFIITCLTWLWATKALNKEYKNSIKFSQ.

12 helical membrane-spanning segments follow: residues Val-34 to Ile-54, Ile-70 to Tyr-90, Ile-102 to Phe-122, Phe-157 to Trp-177, Phe-192 to Glu-212, Phe-231 to Ile-251, Leu-296 to Lys-316, Ala-330 to Leu-350, Phe-361 to Val-381, Leu-390 to Ile-410, Leu-453 to Ser-473, and Ser-476 to Thr-496.

It belongs to the ADP/ATP translocase tlc family.

It is found in the cell membrane. In terms of biological role, provides the rickettsial cell with host ATP in exchange for rickettsial ADP. This is an obligate exchange system. This energy acquiring activity is an important component of rickettsial parasitism. The polypeptide is ADP,ATP carrier protein 4 (tlcD) (Rickettsia conorii (strain ATCC VR-613 / Malish 7)).